A 229-amino-acid chain; its full sequence is Large ribosomal subunit protein bL25 (229 aa).

2 disordered regions span residues 1-21 (MSDALTLPAEARERAGKGASR) and 187-229 (PSAL…KGDD). The segment covering 196–207 (SEEEEDGEEVDA) has biased composition (acidic residues).

This sequence belongs to the bacterial ribosomal protein bL25 family. CTC subfamily. In terms of assembly, part of the 50S ribosomal subunit; part of the 5S rRNA/L5/L18/L25 subcomplex. Contacts the 5S rRNA. Binds to the 5S rRNA independently of L5 and L18.

Functionally, this is one of the proteins that binds to the 5S RNA in the ribosome where it forms part of the central protuberance. The sequence is that of Large ribosomal subunit protein bL25 from Erythrobacter litoralis (strain HTCC2594).